The sequence spans 321 residues: Ribose-phosphate pyrophosphokinase (321 aa).

Residues 44–46 and 103–104 each bind ATP; these read DGE and RQ. Residues histidine 137 and aspartate 179 each coordinate Mg(2+). Lysine 202 is an active-site residue. Residues arginine 204, aspartate 228, and 232–236 each bind D-ribose 5-phosphate; that span reads DTAGT.

It belongs to the ribose-phosphate pyrophosphokinase family. Class I subfamily. As to quaternary structure, homohexamer. Mg(2+) is required as a cofactor.

It localises to the cytoplasm. It catalyses the reaction D-ribose 5-phosphate + ATP = 5-phospho-alpha-D-ribose 1-diphosphate + AMP + H(+). The protein operates within metabolic intermediate biosynthesis; 5-phospho-alpha-D-ribose 1-diphosphate biosynthesis; 5-phospho-alpha-D-ribose 1-diphosphate from D-ribose 5-phosphate (route I): step 1/1. Functionally, involved in the biosynthesis of the central metabolite phospho-alpha-D-ribosyl-1-pyrophosphate (PRPP) via the transfer of pyrophosphoryl group from ATP to 1-hydroxyl of ribose-5-phosphate (Rib-5-P). The chain is Ribose-phosphate pyrophosphokinase from Staphylococcus saprophyticus subsp. saprophyticus (strain ATCC 15305 / DSM 20229 / NCIMB 8711 / NCTC 7292 / S-41).